The sequence spans 669 residues: Methionine--tRNA ligase (669 aa).

The 'HIGH' region signature appears at 15 to 25; that stretch reads PYANGPAHIGH. Positions 146, 149, 158, and 162 each coordinate Zn(2+). The 'KMSKS' region signature appears at 328-332; the sequence is KFSKS. Lys331 is a binding site for ATP. One can recognise a tRNA-binding domain in the interval 570-669; sequence QFKALDLRVG…KEVPAGCGIR (100 aa).

Belongs to the class-I aminoacyl-tRNA synthetase family. MetG type 1 subfamily. As to quaternary structure, homodimer. The cofactor is Zn(2+).

The protein localises to the cytoplasm. It carries out the reaction tRNA(Met) + L-methionine + ATP = L-methionyl-tRNA(Met) + AMP + diphosphate. Is required not only for elongation of protein synthesis but also for the initiation of all mRNA translation through initiator tRNA(fMet) aminoacylation. This chain is Methionine--tRNA ligase, found in Methanothrix thermoacetophila (strain DSM 6194 / JCM 14653 / NBRC 101360 / PT) (Methanosaeta thermophila).